Here is a 715-residue protein sequence, read N- to C-terminus: DNA-directed RNA polymerase subunit beta' (715 aa).

Zn(2+) contacts are provided by Cys69, Cys71, Cys87, and Cys90. Residues 244 to 272 form a disordered region; the sequence is APESQSEVIEAQGPVPQAEEEKQRDQSIQ. Asp520, Asp522, and Asp524 together coordinate Mg(2+).

This sequence belongs to the RNA polymerase beta' chain family. RpoC1 subfamily. In terms of assembly, in plastids the minimal PEP RNA polymerase catalytic core is composed of four subunits: alpha, beta, beta', and beta''. When a (nuclear-encoded) sigma factor is associated with the core the holoenzyme is formed, which can initiate transcription. It depends on Mg(2+) as a cofactor. The cofactor is Zn(2+).

The protein localises to the plastid. The protein resides in the chloroplast. The catalysed reaction is RNA(n) + a ribonucleoside 5'-triphosphate = RNA(n+1) + diphosphate. Its function is as follows. DNA-dependent RNA polymerase catalyzes the transcription of DNA into RNA using the four ribonucleoside triphosphates as substrates. In Zygnema circumcarinatum (Green alga), this protein is DNA-directed RNA polymerase subunit beta'.